The primary structure comprises 201 residues: Flagellin B1 (201 aa).

A propeptide spanning residues 1-11 (MFEQNDDRDRG) is cleaved from the precursor.

It belongs to the archaeal flagellin family.

It is found in the archaeal flagellum. Its function is as follows. Flagellin is the subunit protein which polymerizes to form the filaments of archaeal flagella. The polypeptide is Flagellin B1 (flaB1) (Natrialba magadii (strain ATCC 43099 / DSM 3394 / CCM 3739 / CIP 104546 / IAM 13178 / JCM 8861 / NBRC 102185 / NCIMB 2190 / MS3) (Natronobacterium magadii)).